We begin with the raw amino-acid sequence, 458 residues long: Phosphoglucosamine mutase (458 aa).

The Phosphoserine intermediate role is filled by Ser-106. Mg(2+) contacts are provided by Ser-106, Asp-247, Asp-249, and Asp-251. Ser-106 carries the post-translational modification Phosphoserine.

Belongs to the phosphohexose mutase family. Mg(2+) is required as a cofactor. Post-translationally, activated by phosphorylation.

The catalysed reaction is alpha-D-glucosamine 1-phosphate = D-glucosamine 6-phosphate. Its function is as follows. Catalyzes the conversion of glucosamine-6-phosphate to glucosamine-1-phosphate. This chain is Phosphoglucosamine mutase, found in Chlamydia caviae (strain ATCC VR-813 / DSM 19441 / 03DC25 / GPIC) (Chlamydophila caviae).